Reading from the N-terminus, the 372-residue chain is NAD(P)H-quinone oxidoreductase subunit 1 (372 aa).

8 helical membrane-spanning segments follow: residues 27 to 47 (AIWM…GVLV), 97 to 117 (WLFT…FLIV), 128 to 148 (VGMG…GLLM), 166 to 186 (AAQS…IAMM), 204 to 224 (ILGW…IAAL), 249 to 269 (YSGM…ILSS), 308 to 328 (SLGI…AILL), and 351 to 371 (VGLV…FAFG).

This sequence belongs to the complex I subunit 1 family. As to quaternary structure, NDH-1 is composed of at least 11 different subunits.

The protein localises to the cellular thylakoid membrane. The catalysed reaction is a plastoquinone + NADH + (n+1) H(+)(in) = a plastoquinol + NAD(+) + n H(+)(out). It catalyses the reaction a plastoquinone + NADPH + (n+1) H(+)(in) = a plastoquinol + NADP(+) + n H(+)(out). Its function is as follows. NDH-1 shuttles electrons from an unknown electron donor, via FMN and iron-sulfur (Fe-S) centers, to quinones in the respiratory and/or the photosynthetic chain. The immediate electron acceptor for the enzyme in this species is believed to be plastoquinone. Couples the redox reaction to proton translocation, and thus conserves the redox energy in a proton gradient. The chain is NAD(P)H-quinone oxidoreductase subunit 1 from Nostoc punctiforme (strain ATCC 29133 / PCC 73102).